An 871-amino-acid polypeptide reads, in one-letter code: MLFFDKNKRILKRYSKIVEKINQLDQSMRKKSNEEIVSLSSELKERVNSLEDADRNLVEAFALVREAARRTLGMRPFDVQVMGGIALHEGKVAEMKTGEGKTLAATMPVYLNALIGKGVHVVTVNDYLARRDALWMGPVYLLLGLRVGVINSLGKSYEVVWKDPSLVEKAIKENWSVWPQEFDGEILKEEQMNKEALNAFQVELKEISRKEAYMCDVTYGTNNEFGFDYLRDNLVLDYNDKVQRGHFYAIVDEADSVLIDEARTPLIISGPSKESPSTYRRFAQIAKKFVKDKDFTIDEKARTVILTEEGVAKAEKIIGVDNLYEPGNVSLLYHLINALKALHLFKKDVDYVVMNGEVIIVDEFTGRLLPGRRYSGGLHQAIEAKEGVPIKEESITYATITFQNYFRMYEKLAGMTGTAKTEENEFVQVYGMEVVVIPTHRPMIRKDHDDLVFRTQKEKYEKIVEEIEKRYKKGQPVLVGTTSIEKSELLSSMLKKKGIPHQVLNAKHHEKEAEIVAKAGQKGMVTIATNMAGRGTDIKLGPGVAELGGLCVIGTERHESRRIDNQLRGRAGRQGDPGESIFFLSLEDDLLRIFGGEQIGKVMKILKIEEGQPIQHPMLSKLIENIQKKVEGINFSIRKSLMEMDEVLDKQRSTIYSLRDQILLEKDYDEYLKQIFEDVIGTRVEEFCSGKNWDLEGLKNSLSFLPRDLFEFDGRRFESSEELYEYLFNRMWEEYQKKRQEIGEEYSKVIRFLMLRIIDEHWRRYLEEVEHVREAVQLRAYGQKDPIVEFKKETYLMFDEMMRRINDTIANYVLRVVKVTEKDEKEAKEELGKIRLVHEEFNLVNRAMRRAMEKGKKKGGSHGLGKIRVKR.

Residues Gln-80, Gly-98–Thr-102, and Asp-537 each bind ATP. The tract at residues Met-852–Arg-871 is disordered. A compositionally biased stretch (basic residues) spans Gly-855–Arg-871.

It belongs to the SecA family. As to quaternary structure, monomer and homodimer. Part of the essential Sec protein translocation apparatus which comprises SecA, SecYEG and auxiliary proteins SecDF. Other proteins may also be involved.

Its subcellular location is the cell inner membrane. It localises to the cytoplasm. It catalyses the reaction ATP + H2O + cellular proteinSide 1 = ADP + phosphate + cellular proteinSide 2.. In terms of biological role, part of the Sec protein translocase complex. Interacts with the SecYEG preprotein conducting channel. Has a central role in coupling the hydrolysis of ATP to the transfer of proteins into and across the cell membrane, serving as an ATP-driven molecular motor driving the stepwise translocation of polypeptide chains across the membrane. This Thermotoga neapolitana (strain ATCC 49049 / DSM 4359 / NBRC 107923 / NS-E) protein is Protein translocase subunit SecA.